Here is a 150-residue protein sequence, read N- to C-terminus: Ribonuclease H (150 aa).

The 141-residue stretch at 1-141 (MKFIEVHTDG…VDVLARNQAI (141 aa)) folds into the RNase H type-1 domain. Residues D9, E47, D69, and D133 each coordinate Mg(2+).

It belongs to the RNase H family. In terms of assembly, monomer. Mg(2+) serves as cofactor.

The protein localises to the cytoplasm. It carries out the reaction Endonucleolytic cleavage to 5'-phosphomonoester.. Endonuclease that specifically degrades the RNA of RNA-DNA hybrids. This Xanthomonas euvesicatoria pv. vesicatoria (strain 85-10) (Xanthomonas campestris pv. vesicatoria) protein is Ribonuclease H.